The chain runs to 118 residues: MARIAGINIPDQKHAVIALTSIYGVGKTRSKAILAAAGIAENVKISELSEEQIDTLRDEVAKFVVEGDLRREISMSIKRLMDLGCYRGLRHRRGLPVRGQRTKTNARTRKGPRKPIKK.

Residues 94–118 form a disordered region; sequence GLPVRGQRTKTNARTRKGPRKPIKK.

Belongs to the universal ribosomal protein uS13 family. Part of the 30S ribosomal subunit. Forms a loose heterodimer with protein S19. Forms two bridges to the 50S subunit in the 70S ribosome.

Functionally, located at the top of the head of the 30S subunit, it contacts several helices of the 16S rRNA. In the 70S ribosome it contacts the 23S rRNA (bridge B1a) and protein L5 of the 50S subunit (bridge B1b), connecting the 2 subunits; these bridges are implicated in subunit movement. Contacts the tRNAs in the A and P-sites. The polypeptide is Small ribosomal subunit protein uS13 (Salmonella paratyphi A (strain ATCC 9150 / SARB42)).